Reading from the N-terminus, the 179-residue chain is Large ribosomal subunit protein uL5 (179 aa).

It belongs to the universal ribosomal protein uL5 family. As to quaternary structure, part of the 50S ribosomal subunit; part of the 5S rRNA/L5/L18/L25 subcomplex. Contacts the 5S rRNA and the P site tRNA. Forms a bridge to the 30S subunit in the 70S ribosome.

In terms of biological role, this is one of the proteins that bind and probably mediate the attachment of the 5S RNA into the large ribosomal subunit, where it forms part of the central protuberance. In the 70S ribosome it contacts protein S13 of the 30S subunit (bridge B1b), connecting the 2 subunits; this bridge is implicated in subunit movement. Contacts the P site tRNA; the 5S rRNA and some of its associated proteins might help stabilize positioning of ribosome-bound tRNAs. This chain is Large ribosomal subunit protein uL5, found in Burkholderia vietnamiensis (strain G4 / LMG 22486) (Burkholderia cepacia (strain R1808)).